A 461-amino-acid chain; its full sequence is Argininosuccinate lyase (461 aa).

Serine 28, asparagine 115, and threonine 160 together coordinate 2-(N(omega)-L-arginino)succinate. Histidine 161 acts as the Proton acceptor in catalysis. Serine 282 serves as the catalytic Proton donor. The 2-(N(omega)-L-arginino)succinate site is built by asparagine 290, tyrosine 322, glutamine 327, and lysine 330.

Belongs to the lyase 1 family. Argininosuccinate lyase subfamily. Homotetramer.

It catalyses the reaction 2-(N(omega)-L-arginino)succinate = fumarate + L-arginine. The protein operates within amino-acid biosynthesis; L-arginine biosynthesis; L-arginine from L-ornithine and carbamoyl phosphate: step 3/3. This Schizosaccharomyces pombe (strain 972 / ATCC 24843) (Fission yeast) protein is Argininosuccinate lyase (arg7).